The chain runs to 108 residues: UPF0235 protein RPB_0109 (108 aa).

Belongs to the UPF0235 family.

The polypeptide is UPF0235 protein RPB_0109 (Rhodopseudomonas palustris (strain HaA2)).